The chain runs to 361 residues: Chorismate synthase (361 aa).

R47 contacts NADP(+). FMN contacts are provided by residues 124–126 (RAS), G286, 301–305 (KPTAT), and R327.

This sequence belongs to the chorismate synthase family. In terms of assembly, homotetramer. FMNH2 serves as cofactor.

The catalysed reaction is 5-O-(1-carboxyvinyl)-3-phosphoshikimate = chorismate + phosphate. It participates in metabolic intermediate biosynthesis; chorismate biosynthesis; chorismate from D-erythrose 4-phosphate and phosphoenolpyruvate: step 7/7. In terms of biological role, catalyzes the anti-1,4-elimination of the C-3 phosphate and the C-6 proR hydrogen from 5-enolpyruvylshikimate-3-phosphate (EPSP) to yield chorismate, which is the branch point compound that serves as the starting substrate for the three terminal pathways of aromatic amino acid biosynthesis. This reaction introduces a second double bond into the aromatic ring system. This is Chorismate synthase from Akkermansia muciniphila (strain ATCC BAA-835 / DSM 22959 / JCM 33894 / BCRC 81048 / CCUG 64013 / CIP 107961 / Muc).